Here is a 174-residue protein sequence, read N- to C-terminus: Crossover junction endodeoxyribonuclease RuvC (174 aa).

Active-site residues include aspartate 8, glutamate 68, and aspartate 140. Residues aspartate 8, glutamate 68, and aspartate 140 each coordinate Mg(2+).

This sequence belongs to the RuvC family. Homodimer which binds Holliday junction (HJ) DNA. The HJ becomes 2-fold symmetrical on binding to RuvC with unstacked arms; it has a different conformation from HJ DNA in complex with RuvA. In the full resolvosome a probable DNA-RuvA(4)-RuvB(12)-RuvC(2) complex forms which resolves the HJ. Mg(2+) is required as a cofactor.

The protein localises to the cytoplasm. The catalysed reaction is Endonucleolytic cleavage at a junction such as a reciprocal single-stranded crossover between two homologous DNA duplexes (Holliday junction).. Its function is as follows. The RuvA-RuvB-RuvC complex processes Holliday junction (HJ) DNA during genetic recombination and DNA repair. Endonuclease that resolves HJ intermediates. Cleaves cruciform DNA by making single-stranded nicks across the HJ at symmetrical positions within the homologous arms, yielding a 5'-phosphate and a 3'-hydroxyl group; requires a central core of homology in the junction. The consensus cleavage sequence is 5'-(A/T)TT(C/G)-3'. Cleavage occurs on the 3'-side of the TT dinucleotide at the point of strand exchange. HJ branch migration catalyzed by RuvA-RuvB allows RuvC to scan DNA until it finds its consensus sequence, where it cleaves and resolves the cruciform DNA. The protein is Crossover junction endodeoxyribonuclease RuvC of Legionella pneumophila (strain Paris).